A 339-amino-acid chain; its full sequence is Homeobox protein DBX2 (339 aa).

The homeobox DNA-binding region spans G186 to K245. The interval V282–Q318 is disordered. The span at R290 to I303 shows a compositional bias: basic and acidic residues.

This sequence belongs to the H2.0 homeobox family.

It localises to the nucleus. The sequence is that of Homeobox protein DBX2 (DBX2) from Homo sapiens (Human).